The primary structure comprises 201 residues: MYVPTIENALVPVVVEQSSRGERSFDIFSRLLRERVIFLTGEVEDNMANLIVAQMLFLEAENPDKDIHLYINSPGGSVTAGMAIYDTMQFIKPDVVTYCMGQAASMGAFLLNAGAKGKRYCLENARVMIHQPLGGFRGQASDIEIHAREILFIKERLNRLMAEHSGQDYERVARDTDRDNFMTAQAAKEYGLVDEVLSKRP.

The Nucleophile role is filled by Ser-105. Residue His-130 is part of the active site.

The protein belongs to the peptidase S14 family. Fourteen ClpP subunits assemble into 2 heptameric rings which stack back to back to give a disk-like structure with a central cavity, resembling the structure of eukaryotic proteasomes.

It is found in the cytoplasm. It catalyses the reaction Hydrolysis of proteins to small peptides in the presence of ATP and magnesium. alpha-casein is the usual test substrate. In the absence of ATP, only oligopeptides shorter than five residues are hydrolyzed (such as succinyl-Leu-Tyr-|-NHMec, and Leu-Tyr-Leu-|-Tyr-Trp, in which cleavage of the -Tyr-|-Leu- and -Tyr-|-Trp bonds also occurs).. In terms of biological role, cleaves peptides in various proteins in a process that requires ATP hydrolysis. Has a chymotrypsin-like activity. Plays a major role in the degradation of misfolded proteins. This chain is ATP-dependent Clp protease proteolytic subunit, found in Acinetobacter baylyi (strain ATCC 33305 / BD413 / ADP1).